The sequence spans 368 residues: MSRIDDLQQDIESLLSEINSLEESREKLKAKIKDKRKNEESANPIVQEFEDLFDQFPQLNNFLFNEHPELEETDDKDISRAQADIPATPIPYEPKKRAKLENEEILPEQEWVLKTQPMVQHQMFDPGVADLLDTDILTSPSKRKRKLKIDDISTSDRSELEDYIVLENVYRMFGITFFPLVDPIDLKIKDASGEIFVDREMLGIRLEVFSERTSQFEKPHYVLLKKRIKSNSWFLFKHTIPSFIDVQGIFDDTNGGLVISHDDAYLFAKRVFLQLVEVQKRRQIFKDLEAKKIIHDLDLDLESSMVSFFVKDIKVELFVKQNEIVSCSILDDIHDFSQNNKSKWEIALLGSLDDLELKLNHSFATIFK.

The stretch at 1–43 forms a coiled coil; sequence MSRIDDLQQDIESLLSEINSLEESREKLKAKIKDKRKNEESAN. Residue threonine 88 is modified to Phosphothreonine.

Belongs to the CENP-O/MCM21 family. As to quaternary structure, component of the heterotetrameric kinetochore subcomplex COMA, which consists of AME1, CTF19, MCM21 and OKP1. The COMA subcomplex is part of a larger constitutive centromere-associated network (CCAN) (also known as central kinetochore CTF19 complex in yeast), which is composed of at least AME1, CHL4, CNN1, CTF3, CTF19, IML3, MCM16, MCM21, MCM22, MHF1, MHF2, MIF2, NKP1, NKP2, OKP1 and WIP1. COMA binds the centromeric nucleosome-binding protein MIF2, and to the outer kinetochore MIND subcomplex.

Its subcellular location is the nucleus. The protein localises to the chromosome. It is found in the centromere. The protein resides in the kinetochore. In terms of biological role, component of the kinetochore, a multiprotein complex that assembles on centromeric DNA and attaches chromosomes to spindle microtubules, mediating chromosome segregation and sister chromatid segregation during meiosis and mitosis. Component of the inner kinetochore COMA complex, which connects centromere-associated proteins and the outer kinetochore. COMA interacts with other inner kinetochore proteins to form the inner kinetochore constitutive centromere-associated network (CCAN), which serves as a structural platform for outer kinetochore assembly. The sequence is that of Inner kinetochore subunit MCM21 (MCM21) from Saccharomyces cerevisiae (strain ATCC 204508 / S288c) (Baker's yeast).